The primary structure comprises 410 residues: Imidazolonepropionase (410 aa).

2 residues coordinate Fe(3+): histidine 73 and histidine 75. Zn(2+) contacts are provided by histidine 73 and histidine 75. Residues arginine 82, tyrosine 145, and histidine 178 each coordinate 4-imidazolone-5-propanoate. Tyrosine 145 is a binding site for N-formimidoyl-L-glutamate. Histidine 243 is a binding site for Fe(3+). Histidine 243 is a Zn(2+) binding site. Residue glutamine 246 coordinates 4-imidazolone-5-propanoate. Aspartate 318 lines the Fe(3+) pocket. Aspartate 318 is a binding site for Zn(2+). N-formimidoyl-L-glutamate is bound by residues asparagine 320 and glycine 322. Serine 323 contacts 4-imidazolone-5-propanoate.

This sequence belongs to the metallo-dependent hydrolases superfamily. HutI family. Zn(2+) is required as a cofactor. Fe(3+) serves as cofactor.

The protein resides in the cytoplasm. The catalysed reaction is 4-imidazolone-5-propanoate + H2O = N-formimidoyl-L-glutamate. It functions in the pathway amino-acid degradation; L-histidine degradation into L-glutamate; N-formimidoyl-L-glutamate from L-histidine: step 3/3. Catalyzes the hydrolytic cleavage of the carbon-nitrogen bond in imidazolone-5-propanoate to yield N-formimidoyl-L-glutamate. It is the third step in the universal histidine degradation pathway. The sequence is that of Imidazolonepropionase from Shewanella baltica (strain OS223).